Here is a 201-residue protein sequence, read N- to C-terminus: MQTSPLLESLMEALRCLPGVGPKSAQRMAFHLLQRDRSGGMRLAQALTRAMSEIGHCRDCRTFTEQEVCTICTNARRRENGQICVVESPADIHAIEQTGQYSGRYFVLMGHLSPLDGIGPQDIGLDRLEVRLSQEAVSEVILATNPTVEGEATANYIAEMCAAHGVLASRIAHGVPVGGELEMVDGTTLSHSLAGRHPVTR.

A C4-type zinc finger spans residues C57–C72. Residues G81–P176 enclose the Toprim domain.

The protein belongs to the RecR family.

Functionally, may play a role in DNA repair. It seems to be involved in an RecBC-independent recombinational process of DNA repair. It may act with RecF and RecO. The polypeptide is Recombination protein RecR (Edwardsiella ictaluri (strain 93-146)).